The sequence spans 273 residues: 2,3,4,5-tetrahydropyridine-2,6-dicarboxylate N-succinyltransferase (273 aa).

Substrate contacts are provided by R104 and D141.

This sequence belongs to the transferase hexapeptide repeat family. Homotrimer.

The protein resides in the cytoplasm. The catalysed reaction is (S)-2,3,4,5-tetrahydrodipicolinate + succinyl-CoA + H2O = (S)-2-succinylamino-6-oxoheptanedioate + CoA. It participates in amino-acid biosynthesis; L-lysine biosynthesis via DAP pathway; LL-2,6-diaminopimelate from (S)-tetrahydrodipicolinate (succinylase route): step 1/3. The polypeptide is 2,3,4,5-tetrahydropyridine-2,6-dicarboxylate N-succinyltransferase (Nitrosomonas europaea (strain ATCC 19718 / CIP 103999 / KCTC 2705 / NBRC 14298)).